Here is a 312-residue protein sequence, read N- to C-terminus: Aldehyde reductase YPR1 (312 aa).

The active-site Proton donor is tyrosine 56. Histidine 112 is a substrate binding site. 220–274 (SPFGSANAPLLKEQAIIDMAKKHGVEPAQLIISWSIQRGYVVLAKSVNPERIVSN) serves as a coordination point for NADP(+).

It belongs to the aldo/keto reductase family.

Its subcellular location is the cytoplasm. It catalyses the reaction a primary alcohol + NADP(+) = an aldehyde + NADPH + H(+). It carries out the reaction 2-methylbutan-1-ol + NADP(+) = 2-methylbutanal + NADPH + H(+). The catalysed reaction is hexan-1-ol + NADP(+) = hexanal + NADPH + H(+). Functionally, aldehyde reductase with broad substrate specificity, catalyzing the NADPH-dependent reduction of aldehydes into the corresponding alcohols. In vitro, displays high specific activity towards 2-methylbutanal (2-methylbutyraldehyde), as well as other aldehydes such as hexanal (a toxic lipid peroxidation product and phytoalexin), but exhibits extremely low activity as a glycerol dehydrogenase. Seems to contribute to 2-methylbutanal reduction in vivo, and may therefore play a role in isoleucine catabolism and fusel alcohol formation. In Saccharomyces cerevisiae (strain ATCC 204508 / S288c) (Baker's yeast), this protein is Aldehyde reductase YPR1 (YPR1).